A 438-amino-acid polypeptide reads, in one-letter code: 3-phosphoshikimate 1-carboxyvinyltransferase (438 aa).

3-phosphoshikimate-binding residues include K21, S22, and R26. K21 provides a ligand contact to phosphoenolpyruvate. Phosphoenolpyruvate contacts are provided by G95 and R123. S167, Q169, D315, and K342 together coordinate 3-phosphoshikimate. Residue Q169 participates in phosphoenolpyruvate binding. The active-site Proton acceptor is the D315. Phosphoenolpyruvate-binding residues include R346 and R387.

It belongs to the EPSP synthase family. In terms of assembly, monomer.

Its subcellular location is the cytoplasm. It catalyses the reaction 3-phosphoshikimate + phosphoenolpyruvate = 5-O-(1-carboxyvinyl)-3-phosphoshikimate + phosphate. Its pathway is metabolic intermediate biosynthesis; chorismate biosynthesis; chorismate from D-erythrose 4-phosphate and phosphoenolpyruvate: step 6/7. Functionally, catalyzes the transfer of the enolpyruvyl moiety of phosphoenolpyruvate (PEP) to the 5-hydroxyl of shikimate-3-phosphate (S3P) to produce enolpyruvyl shikimate-3-phosphate and inorganic phosphate. This is 3-phosphoshikimate 1-carboxyvinyltransferase from Coxiella burnetii (strain CbuK_Q154) (Coxiella burnetii (strain Q154)).